We begin with the raw amino-acid sequence, 293 residues long: Glutamyl-Q tRNA(Asp) synthetase (293 aa).

L-glutamate-binding positions include 8–12 and E44; that span reads RFAPT. Residues 11-21 carry the 'HIGH' region motif; that stretch reads PTPSGYLHFGS. 4 residues coordinate Zn(2+): C100, C102, Y114, and C118. The L-glutamate site is built by Y171 and R189. The 'KMSKS' region signature appears at 227-231; sequence KLGKS. Residue K230 coordinates ATP.

It belongs to the class-I aminoacyl-tRNA synthetase family. GluQ subfamily. Zn(2+) is required as a cofactor.

Its function is as follows. Catalyzes the tRNA-independent activation of glutamate in presence of ATP and the subsequent transfer of glutamate onto a tRNA(Asp). Glutamate is transferred on the 2-amino-5-(4,5-dihydroxy-2-cyclopenten-1-yl) moiety of the queuosine in the wobble position of the QUC anticodon. The chain is Glutamyl-Q tRNA(Asp) synthetase from Pseudomonas aeruginosa (strain LESB58).